We begin with the raw amino-acid sequence, 154 residues long: Large-conductance mechanosensitive channel (154 aa).

Helical transmembrane passes span 14 to 34, 38 to 58, and 81 to 101; these read VMDL…VTSL, IITP…LFIN, and GLFL…FIVI.

The protein belongs to the MscL family. As to quaternary structure, homopentamer.

It is found in the cell membrane. Its function is as follows. Channel that opens in response to stretch forces in the membrane lipid bilayer. May participate in the regulation of osmotic pressure changes within the cell. The polypeptide is Large-conductance mechanosensitive channel (Brevibacillus brevis (strain 47 / JCM 6285 / NBRC 100599)).